The chain runs to 528 residues: Lysine--tRNA ligase (528 aa).

A 'HIGH' region motif is present at residues proline 36–asparagine 44. The 'KMSKS' region motif lies at lysine 287–serine 291.

Belongs to the class-I aminoacyl-tRNA synthetase family.

The protein resides in the cytoplasm. It carries out the reaction tRNA(Lys) + L-lysine + ATP = L-lysyl-tRNA(Lys) + AMP + diphosphate. This is Lysine--tRNA ligase (lysS) from Treponema pallidum (strain Nichols).